The sequence spans 474 residues: Bifunctional protein HldE (474 aa).

Residues 1–321 (MILSSSLRPT…EYLHSSHQGE (321 aa)) are ribokinase. 198 to 201 (NKKE) lines the ATP pocket. Aspartate 266 is an active-site residue. Positions 348–474 (FTNGCFDILH…SAVVKKIQGS (127 aa)) are cytidylyltransferase.

This sequence in the N-terminal section; belongs to the carbohydrate kinase PfkB family. The protein in the C-terminal section; belongs to the cytidylyltransferase family. Homodimer.

The enzyme catalyses D-glycero-beta-D-manno-heptose 7-phosphate + ATP = D-glycero-beta-D-manno-heptose 1,7-bisphosphate + ADP + H(+). It catalyses the reaction D-glycero-beta-D-manno-heptose 1-phosphate + ATP + H(+) = ADP-D-glycero-beta-D-manno-heptose + diphosphate. Its pathway is nucleotide-sugar biosynthesis; ADP-L-glycero-beta-D-manno-heptose biosynthesis; ADP-L-glycero-beta-D-manno-heptose from D-glycero-beta-D-manno-heptose 7-phosphate: step 1/4. The protein operates within nucleotide-sugar biosynthesis; ADP-L-glycero-beta-D-manno-heptose biosynthesis; ADP-L-glycero-beta-D-manno-heptose from D-glycero-beta-D-manno-heptose 7-phosphate: step 3/4. Functionally, catalyzes the phosphorylation of D-glycero-D-manno-heptose 7-phosphate at the C-1 position to selectively form D-glycero-beta-D-manno-heptose-1,7-bisphosphate. Catalyzes the ADP transfer from ATP to D-glycero-beta-D-manno-heptose 1-phosphate, yielding ADP-D-glycero-beta-D-manno-heptose. This chain is Bifunctional protein HldE, found in Wolinella succinogenes (strain ATCC 29543 / DSM 1740 / CCUG 13145 / JCM 31913 / LMG 7466 / NCTC 11488 / FDC 602W) (Vibrio succinogenes).